A 251-amino-acid chain; its full sequence is Chlorocatechol 1,2-dioxygenase (251 aa).

Positions 130, 164, 188, and 190 each coordinate Fe cation.

This sequence belongs to the intradiol ring-cleavage dioxygenase family. Fe(3+) is required as a cofactor.

It carries out the reaction 3-chlorocatechol + O2 = (2E,4Z)-2-chloromuconate + 2 H(+). The catalysed reaction is 3,4-dichlorocatechol + O2 = (2Z,4Z)-2,3-dichloromuconate + 2 H(+). The enzyme catalyses 3,5-dichlorocatechol + O2 = (2E,4E)-2,4-dichloromuconate + 2 H(+). It catalyses the reaction 3,6-dichlorocatechol + O2 = (2E,4E)-2,5-dichloromuconate + H(+). It carries out the reaction 3,4,6-trichlorocatechol + O2 = (2Z,4E)-2,3,5-trichloromuconate + H(+). Its pathway is xenobiotic degradation. Its function is as follows. Chlorocatechol 1,2-dioxygenase involved in the degradation of chlorinated benzenes, that occurs via chlorocatechol intermediates. Displays broad substrate specificity. Preferentially cleaves 3-chlorocatechol and 3,4-dichlorocatechol, and shows lower activity on 3,5-dichlorocatechol, 3,6-dichlorocatechol and 3,4,6-trichlorocatechol in vitro. Is not able to convert 3,4,5-trichlorocatechol and 3,4,5,6-tetrachlorocatechol. Thus, probably functions in the degradation pathways of 1,2-dichlorobenzene, 1,4-dichlorobenzene and 1,2,4-trichlorobenzene (via 3,4-dichlorocatechol, 3,6-dichlorocatechol and 3,4,6-trichlorocatechol intermediates, respectively), which allow Pseudomonas sp. strain P51 to grow on these substrates as the sole carbon and energy source. The protein is Chlorocatechol 1,2-dioxygenase of Pseudomonas sp. (strain P51).